A 591-amino-acid chain; its full sequence is Parathyroid hormone/parathyroid hormone-related peptide receptor (591 aa).

Residues 1–26 form the signal peptide; it reads MGTARIAPSLALLLCCPVLSSAYALV. Residues 27–188 lie on the Extracellular side of the membrane; the sequence is DADDVFTKEE…REREVFDRLG (162 aa). 3 disulfides stabilise this stretch: cysteine 48–cysteine 117, cysteine 108–cysteine 148, and cysteine 131–cysteine 170. A disordered region spans residues 67-104; sequence KGWTPASTSGKPRKEKAPGKFYPESKENKDVPTGSRRR. Residues 81–96 show a composition bias toward basic and acidic residues; the sequence is EKAPGKFYPESKENKD. Asparagine 151, asparagine 161, asparagine 166, and asparagine 176 each carry an N-linked (GlcNAc...) asparagine glycan. Residues 189 to 212 traverse the membrane as a helical segment; it reads MIYTVGYSMSLASLTVAVLILAYF. The Cytoplasmic segment spans residues 213–219; the sequence is RRLHCTR. The chain crosses the membrane as a helical span at residues 220–239; the sequence is NYIHMHMFLSFMLRAASIFV. Residues 240-282 lie on the Extracellular side of the membrane; that stretch reads KDAVLYSGFTLDEAERLTEEELHIIAQVPPPPAAAAVGYAGCR. A helical membrane pass occupies residues 283-306; the sequence is VAVTFFLYFLATNYYWILVEGLYL. The Cytoplasmic portion of the chain corresponds to 307–320; the sequence is HSLIFMAFFSEKKY. Residues 321 to 342 traverse the membrane as a helical segment; it reads LWGFTIFGWGLPAVFVAVWVGV. Over 343-361 the chain is Extracellular; sequence RATLANTGCWDLSSGHKKW. Residues 362 to 382 form a helical membrane-spanning segment; it reads IIQVPILASVVLNFILFINII. Residues 383-409 lie on the Cytoplasmic side of the membrane; the sequence is RVLATKLRETNAGRCDTRQQYRKLLRS. A helical transmembrane segment spans residues 410–428; it reads TLVLVPLFGVHYTVFMALP. The Extracellular portion of the chain corresponds to 429–440; it reads YTEVSGTLWQIQ. Residues 441-463 traverse the membrane as a helical segment; the sequence is MHYEMLFNSFQGFFVAIIYCFCN. Topologically, residues 464 to 591 are cytoplasmic; that stretch reads GEVQAEIRKS…LLQEEWETVM (128 aa). The Important for interaction with G proteins motif lies at 474–477; that stretch reads WSRW.

It belongs to the G-protein coupled receptor 2 family. Homodimer in the absence of bound ligand. Peptide hormone binding leads to dissociation of the homodimer. N-glycosylated. As to expression, detected in kidney.

The protein resides in the cell membrane. G-protein-coupled receptor for parathyroid hormone (PTH) and for parathyroid hormone-related peptide (PTHLH). Ligand binding causes a conformation change that triggers signaling via guanine nucleotide-binding proteins (G proteins) and modulates the activity of downstream effectors, such as adenylate cyclase (cAMP). PTH1R is coupled to G(s) G alpha proteins and mediates activation of adenylate cyclase activity. PTHLH dissociates from PTH1R more rapidly than PTH; as consequence, the cAMP response induced by PTHLH decays faster than the response induced by PTH. This chain is Parathyroid hormone/parathyroid hormone-related peptide receptor (Pth1r), found in Mus musculus (Mouse).